A 216-amino-acid chain; its full sequence is Small ribosomal subunit protein uS4 (216 aa).

Positions 111-175 (RRLQTQVLRL…SPLVSESHPE (65 aa)) constitute an S4 RNA-binding domain. Residues 194 to 216 (VAEAKQAKEKPPERGGRKRRGRR) form a disordered region. Residues 198 to 208 (KQAKEKPPERG) show a composition bias toward basic and acidic residues.

It belongs to the universal ribosomal protein uS4 family. In terms of assembly, part of the 30S ribosomal subunit. Contacts protein S5. The interaction surface between S4 and S5 is involved in control of translational fidelity.

In terms of biological role, one of the primary rRNA binding proteins, it binds directly to 16S rRNA where it nucleates assembly of the body of the 30S subunit. With S5 and S12 plays an important role in translational accuracy. This is Small ribosomal subunit protein uS4 from Methanosarcina barkeri (strain Fusaro / DSM 804).